A 313-amino-acid polypeptide reads, in one-letter code: Dihydroorotate dehydrogenase (fumarate) (313 aa).

FMN is bound by residues Ala-20 and Lys-44 to Ser-45. Substrate-binding positions include Lys-44, Asn-68–Leu-72, and Asn-128. Position 128 (Asn-128) interacts with FMN. The Nucleophile role is filled by Cys-131. Position 133 (Asn-133) interacts with substrate. 2 residues coordinate FMN: Lys-165 and Val-194. Asn-195–Ser-196 contacts substrate. FMN contacts are provided by residues Gly-223, Cys-249, Cys-249 to Gly-251, and Gly-272 to Thr-273.

It belongs to the dihydroorotate dehydrogenase family. Type 1 subfamily. In terms of assembly, homodimer. It depends on FMN as a cofactor.

The protein localises to the cytoplasm. It carries out the reaction (S)-dihydroorotate + fumarate = orotate + succinate. It participates in pyrimidine metabolism; UMP biosynthesis via de novo pathway. Catalyzes the conversion of dihydroorotate to orotate with fumarate as the electron acceptor. Molecular oxygen can replace fumarate in vitro. The sequence is that of Dihydroorotate dehydrogenase (fumarate) from Trypanosoma brucei brucei (strain 927/4 GUTat10.1).